A 210-amino-acid polypeptide reads, in one-letter code: Redox-sensing transcriptional repressor Rex (210 aa).

A DNA-binding region (H-T-H motif) is located at residues 15 to 54 (LYYRIFKRFNTDGIEKASSKQIADALGIDSATVRRDFSYF). 89-94 (GCGNIG) is a binding site for NAD(+).

Belongs to the transcriptional regulatory Rex family. As to quaternary structure, homodimer.

The protein localises to the cytoplasm. Functionally, modulates transcription in response to changes in cellular NADH/NAD(+) redox state. The sequence is that of Redox-sensing transcriptional repressor Rex from Streptococcus agalactiae serotype Ia (strain ATCC 27591 / A909 / CDC SS700).